A 329-amino-acid polypeptide reads, in one-letter code: Putative oligopeptide transport ATP-binding protein YkfD (329 aa).

The region spanning Leu-7 to Leu-252 is the ABC transporter domain. Gly-44–Ser-51 serves as a coordination point for ATP.

The protein belongs to the ABC transporter superfamily.

The chain is Putative oligopeptide transport ATP-binding protein YkfD (ykfD) from Bacillus subtilis (strain 168).